Reading from the N-terminus, the 118-residue chain is Small ribosomal subunit protein uS13 (118 aa).

The tract at residues 92 to 118 is disordered; that stretch reads RRNLPVRGQNTKNNARTRKGPTRPLKR. Over residues 106-118 the composition is skewed to basic residues; that stretch reads ARTRKGPTRPLKR.

The protein belongs to the universal ribosomal protein uS13 family. Part of the 30S ribosomal subunit. Forms a loose heterodimer with protein S19. Forms two bridges to the 50S subunit in the 70S ribosome.

Located at the top of the head of the 30S subunit, it contacts several helices of the 16S rRNA. In the 70S ribosome it contacts the 23S rRNA (bridge B1a) and protein L5 of the 50S subunit (bridge B1b), connecting the 2 subunits; these bridges are implicated in subunit movement. Contacts the tRNAs in the A and P-sites. The polypeptide is Small ribosomal subunit protein uS13 (Psychrobacter arcticus (strain DSM 17307 / VKM B-2377 / 273-4)).